Here is a 308-residue protein sequence, read N- to C-terminus: Mitochondrial import receptor subunit TOM40B (308 aa).

Positions 1 to 29 are disordered; sequence MGNTLGLAPMGTLPRRSHRREEPLPNPGS. A required for mitochondrial targeting region spans residues 281–308; that stretch reads PLPVTLALGAFLNHWRNRFHCGFSITVG.

The protein belongs to the Tom40 family. In terms of assembly, forms part of the preprotein translocase of the outer mitochondrial membrane (TOM complex) containing TOMM22, TOMM40, TOMM40L and TOMM70. Interacts with mitochondrial targeting sequences.

It is found in the mitochondrion outer membrane. In terms of biological role, potential channel-forming protein implicated in import of protein precursors into mitochondria. This chain is Mitochondrial import receptor subunit TOM40B (Tomm40l), found in Mus musculus (Mouse).